The sequence spans 200 residues: 6,7-dimethyl-8-ribityllumazine synthase (200 aa).

5-amino-6-(D-ribitylamino)uracil contacts are provided by residues W25, 59 to 61 (SWE), and 119 to 121 (VLI). (2S)-2-hydroxy-3-oxobutyl phosphate is bound at residue 124 to 125 (ET). H127 acts as the Proton donor in catalysis. F152 serves as a coordination point for 5-amino-6-(D-ribitylamino)uracil. R166 serves as a coordination point for (2S)-2-hydroxy-3-oxobutyl phosphate.

It belongs to the DMRL synthase family. Homopentamer.

It carries out the reaction (2S)-2-hydroxy-3-oxobutyl phosphate + 5-amino-6-(D-ribitylamino)uracil = 6,7-dimethyl-8-(1-D-ribityl)lumazine + phosphate + 2 H2O + H(+). Its pathway is cofactor biosynthesis; riboflavin biosynthesis; riboflavin from 2-hydroxy-3-oxobutyl phosphate and 5-amino-6-(D-ribitylamino)uracil: step 1/2. Functionally, catalyzes the formation of 6,7-dimethyl-8-ribityllumazine by condensation of 5-amino-6-(D-ribitylamino)uracil with 3,4-dihydroxy-2-butanone 4-phosphate. This is the penultimate step in the biosynthesis of riboflavin. In Pyricularia oryzae (strain 70-15 / ATCC MYA-4617 / FGSC 8958) (Rice blast fungus), this protein is 6,7-dimethyl-8-ribityllumazine synthase.